A 460-amino-acid polypeptide reads, in one-letter code: Beta-1,3-xylanase TXYA (460 aa).

Residues 1-22 form the signal peptide; it reads MKKLAKMISVATLGACAFQAHA. The GH26 domain occupies 23–337; that stretch reads LDGKLVPDQG…LSDPKFIRHS (315 aa). Residue glutamate 138 is the Proton donor of the active site. Glutamate 234 (nucleophile) is an active-site residue. Residues 347-371 form a disordered region; that stretch reads GNSDGGNGGDNGGDNGGDNGGETPE. Gly residues predominate over residues 348–366; that stretch reads NSDGGNGGDNGGDNGGDNG. The segment at 368 to 460 is carbohydrate binding module (CBM); it reads ETPENCTDDF…TVTFTNQVCN (93 aa). 2 cysteine pairs are disulfide-bonded: cysteine 373–cysteine 459 and cysteine 404–cysteine 409.

The protein belongs to the glycosyl hydrolase 26 family.

The enzyme catalyses Random hydrolysis of (1-&gt;3)-beta-D-glycosidic linkages in (1-&gt;3)-beta-D-xylans.. Completely inhibited by Cu(2+), Hg(2+) and N-bromosuccinimide. Strongly inhibited by Ag(+), Zn(2+) and Pb(2+). Moderately inhibited by Fe(3+), Al(3+), Mn(2+), dithiothreitol and p-chloromercuribenzoic acid. Slightly activated by Mg(2+) and Ca(2+). Unaffected by Na(+), K(+), Ba(2+), EDTA, iodoacetic acid and N-ethylmalaimide. Catalyzes the hydrolysis of beta-1,3-xylan into oligosaccharides, mainly xylotriose and xylobiose with smaller amounts of xylotetraose, xylose, xylopentaose and xylohexaose. Weakly active toward beta-1,3-xylotriose, yielding xylose and xylobiose. Converts beta-1,3-xylotetraose into xylotriose, xylobiose and xylose. Converts beta-1,3-xylopentaose into xylotetraose, xylotriose, xylobiose and xylose. Does not hydrolyze xylobiose, p-nitrophenyl-beta-xyloside, beta-1,4-xylan, curdlan or carboxymethylcellulose. In Vibrio sp, this protein is Beta-1,3-xylanase TXYA.